Reading from the N-terminus, the 277-residue chain is Myelin proteolipid protein (277 aa).

The Cytoplasmic segment spans residues 1-10 (MGLLECCARC). S-palmitoyl cysteine attachment occurs at residues Cys-6, Cys-7, and Cys-10. The helical transmembrane segment at 11-36 (LVGAPFASLVATGLCFFGVALFCGCG) threads the bilayer. The Extracellular portion of the chain corresponds to 37 to 59 (HEALTGTEKLIETYFSKNYQDYE). The helical transmembrane segment at 60–88 (YLINVIHAFQYVIYGTASFFFLYGALLLA) threads the bilayer. The Cytoplasmic portion of the chain corresponds to 89–151 (EGFYTTGAVR…LGKWLGHPDK (63 aa)). The S-palmitoyl cysteine moiety is linked to residue Cys-109. Ser-114 carries the post-translational modification Phosphoserine. Phosphothreonine is present on residues Thr-116 and Thr-118. S-palmitoyl cysteine attachment occurs at residues Cys-139 and Cys-141. A helical membrane pass occupies residues 152–178 (FVGITYALTIVWLLVFACSAVPVYIYF). Residues 179 to 238 (NTWTTCQSIAFPSKTSASIGSLCADARMYGVLPWNAFPGKVCGSNLLSICKTAEFQMTFH) lie on the Extracellular side of the membrane. 2 disulfides stabilise this stretch: Cys-184–Cys-228 and Cys-201–Cys-220. Ser-199 carries the O-palmitoyl serine lipid modification. The helical transmembrane segment at 239-268 (LFIAAFVGAAATLVSLLTFMIAATYNFAVL) threads the bilayer. At 269–277 (KLMGRGTKF) the chain is on the cytoplasmic side.

It belongs to the myelin proteolipid protein family.

The protein resides in the cell membrane. It localises to the myelin membrane. Its function is as follows. This is the major myelin protein from the central nervous system. It plays an important role in the formation or maintenance of the multilamellar structure of myelin. This is Myelin proteolipid protein (PLP1) from Canis lupus familiaris (Dog).